The sequence spans 345 residues: GTPase Obg (345 aa).

The Obg domain maps to 1 to 158 (MFIDSVKITL…RLVRLELKLI (158 aa)). Residues 159–339 (ADVGLVGFPN…LKFMLLEEIK (181 aa)) enclose the OBG-type G domain. Residues 165-172 (GFPNVGKS), 190-194 (FTTLT), 212-215 (DIPG), 280-283 (SKSD), and 320-322 (SSL) each bind GTP. Residues serine 172 and threonine 192 each coordinate Mg(2+).

It belongs to the TRAFAC class OBG-HflX-like GTPase superfamily. OBG GTPase family. Monomer. Mg(2+) serves as cofactor.

Its subcellular location is the cytoplasm. In terms of biological role, an essential GTPase which binds GTP, GDP and possibly (p)ppGpp with moderate affinity, with high nucleotide exchange rates and a fairly low GTP hydrolysis rate. Plays a role in control of the cell cycle, stress response, ribosome biogenesis and in those bacteria that undergo differentiation, in morphogenesis control. In Campylobacter jejuni subsp. jejuni serotype O:6 (strain 81116 / NCTC 11828), this protein is GTPase Obg.